A 397-amino-acid chain; its full sequence is Autophagy-related protein 29 (397 aa).

Residues 71–397 form a disordered region; that stretch reads ATAAVRNSGP…RSRYTSSSNQ (327 aa). Residues 230 to 240 are compositionally biased toward acidic residues; the sequence is QYEDDDDDESE. Over residues 245-259 the composition is skewed to polar residues; it reads PYTSPSSKTSAQDLG. The span at 269-282 shows a compositional bias: basic residues; that stretch reads SGKRPHKSHGKPAI. 2 stretches are compositionally biased toward basic and acidic residues: residues 300-309 and 330-341; these read KPDKTDRSTE and GGKDKGYSREGS. Composition is skewed to polar residues over residues 343–363 and 381–397; these read GTPSMGSSYSDLDDASVTQSA and FSISQAFRSRYTSSSNQ.

The protein belongs to the ATG29 family. As to quaternary structure, forms a stable complex with ATG17 and ATG31. Interacts directly with ATG31. The ATG17-ATG29-ATG31 complex interacts with the ATG1-ATG13 complex. Note=The interaction with the ATG1-ATG13 complex is induced by starvation.

The protein localises to the preautophagosomal structure. In terms of biological role, plays a role in autophagy. Functions at the preautophagosomal structure (PAS) in order to form normal autophagosomes under starvation conditions. Also plays a role in mitophagy. Autophagy is required for proper vegetative growth, asexual/sexual reproduction, and full virulence. Autophagy is particularly involved in the biosynthesis of deoxynivalenol (DON), an important virulence determinant. In Gibberella zeae (strain ATCC MYA-4620 / CBS 123657 / FGSC 9075 / NRRL 31084 / PH-1) (Wheat head blight fungus), this protein is Autophagy-related protein 29.